Consider the following 303-residue polypeptide: Methionyl-tRNA formyltransferase (303 aa).

110–113 is a (6S)-5,6,7,8-tetrahydrofolate binding site; it reads SLLP.

It belongs to the Fmt family.

The catalysed reaction is L-methionyl-tRNA(fMet) + (6R)-10-formyltetrahydrofolate = N-formyl-L-methionyl-tRNA(fMet) + (6S)-5,6,7,8-tetrahydrofolate + H(+). Functionally, attaches a formyl group to the free amino group of methionyl-tRNA(fMet). The formyl group appears to play a dual role in the initiator identity of N-formylmethionyl-tRNA by promoting its recognition by IF2 and preventing the misappropriation of this tRNA by the elongation apparatus. The protein is Methionyl-tRNA formyltransferase of Ehrlichia ruminantium (strain Welgevonden).